Consider the following 261-residue polypeptide: tRNA pseudouridine synthase A (261 aa).

Catalysis depends on aspartate 51, which acts as the Nucleophile. Tyrosine 109 serves as a coordination point for substrate.

The protein belongs to the tRNA pseudouridine synthase TruA family. As to quaternary structure, homodimer.

The catalysed reaction is uridine(38/39/40) in tRNA = pseudouridine(38/39/40) in tRNA. In terms of biological role, formation of pseudouridine at positions 38, 39 and 40 in the anticodon stem and loop of transfer RNAs. The chain is tRNA pseudouridine synthase A from Shewanella denitrificans (strain OS217 / ATCC BAA-1090 / DSM 15013).